Here is a 511-residue protein sequence, read N- to C-terminus: Ribonuclease Y (511 aa).

The helical transmembrane segment at 3–23 (VGILIGIIILGVVGFIQYTLI) threads the bilayer. The KH domain occupies 201-286 (TVHVVALPND…EMVERAIKDV (86 aa)). Residues 327–420 (VLKHSIEVSY…VQAADAISAA (94 aa)) enclose the HD domain.

This sequence belongs to the RNase Y family.

It localises to the cell membrane. Its function is as follows. Endoribonuclease that initiates mRNA decay. The polypeptide is Ribonuclease Y (Clostridium perfringens (strain SM101 / Type A)).